We begin with the raw amino-acid sequence, 224 residues long: tRNA (guanine-N(7)-)-methyltransferase (224 aa).

Glu-54, Glu-79, Glu-106, and Asp-129 together coordinate S-adenosyl-L-methionine. Residue Asp-129 is part of the active site. Positions 133 and 165 each coordinate substrate.

Belongs to the class I-like SAM-binding methyltransferase superfamily. TrmB family.

It carries out the reaction guanosine(46) in tRNA + S-adenosyl-L-methionine = N(7)-methylguanosine(46) in tRNA + S-adenosyl-L-homocysteine. Its pathway is tRNA modification; N(7)-methylguanine-tRNA biosynthesis. Its function is as follows. Catalyzes the formation of N(7)-methylguanine at position 46 (m7G46) in tRNA. The polypeptide is tRNA (guanine-N(7)-)-methyltransferase (Chlamydia muridarum (strain MoPn / Nigg)).